We begin with the raw amino-acid sequence, 889 residues long: Disease resistance protein RPS5 (889 aa).

Glycine 2 carries N-myristoyl glycine lipidation. Residue cysteine 4 is the site of S-palmitoyl cysteine attachment. Residues 29-58 adopt a coiled-coil conformation; the sequence is IHNLSKNLASLQKAMRMLKARQYDVIRRLE. One can recognise an NB-ARC domain in the interval 140–444; that stretch reads SEATPFADVD…SEGFINEKEG (305 aa). 183–190 contributes to the ATP binding site; the sequence is GMGGVGKT. LRR repeat units follow at residues 518 to 539, 540 to 561, 564 to 586, 588 to 610, 611 to 633, and 634 to 656; these read TVRKISLMNNEIEEIFDSHECA, ALTTLFLQKNDVVKISAEFFRC, HLVVLDLSENQSLNELPEEISEL, SLRYFNLSYTCIHQLPVGLWTLK, KLIHLNLEHMSSLGSILGISNLW, and NLRTLGLRDSRLLLDMSLVKELQ.

This sequence belongs to the disease resistance NB-LRR family. In uninfected plants, interacts with PBS1 through the coiled coil domain. Homodimer.

It localises to the cell membrane. In terms of biological role, disease resistance (R) protein that specifically recognizes the avrPphB type III effector avirulence protein from Pseudomonas syringae. Also confers resistance against Hyaloperonospora parasitica (downy mildew). Resistance proteins guard the plant against pathogens that contain an appropriate avirulence protein via an indirect interaction with this avirulence protein. That triggers a defense system including the hypersensitive response, which restricts the pathogen growth. Requires PBS1 to trigger the defense reaction against avrPphB. In case of infection by Pseudomonas syringae, AvrPphB triggers RPS5-mediated defense mechanism via the cleavage of PBS1, suggesting that the cleavage of PBS1 could trigger an exchange of ADP for ATP, thereby activating RPS5. May function as a fine-tuned sensor of alterations in the structure of the effector target PBS1. This is Disease resistance protein RPS5 (RPS5) from Arabidopsis thaliana (Mouse-ear cress).